A 509-amino-acid chain; its full sequence is ATP synthase subunit alpha (509 aa).

Position 171–178 (171–178 (GDRKTGKT)) interacts with ATP.

It belongs to the ATPase alpha/beta chains family. In terms of assembly, F-type ATPases have 2 components, CF(1) - the catalytic core - and CF(0) - the membrane proton channel. CF(1) has five subunits: alpha(3), beta(3), gamma(1), delta(1), epsilon(1). CF(0) has three main subunits: a(1), b(2) and c(9-12). The alpha and beta chains form an alternating ring which encloses part of the gamma chain. CF(1) is attached to CF(0) by a central stalk formed by the gamma and epsilon chains, while a peripheral stalk is formed by the delta and b chains.

It is found in the cell inner membrane. The enzyme catalyses ATP + H2O + 4 H(+)(in) = ADP + phosphate + 5 H(+)(out). Functionally, produces ATP from ADP in the presence of a proton gradient across the membrane. The alpha chain is a regulatory subunit. The polypeptide is ATP synthase subunit alpha (Ehrlichia chaffeensis (strain ATCC CRL-10679 / Arkansas)).